Consider the following 152-residue polypeptide: Transcriptional repressor NrdR (152 aa).

A zinc finger lies at 3–34; that stretch reads CPACQHNGTRVLDSRPVDEGRSIRRRRECESC. An ATP-cone domain is found at 49–139; sequence LIVVKKEGIR…VYRQFKDINV (91 aa).

It belongs to the NrdR family. It depends on Zn(2+) as a cofactor.

In terms of biological role, negatively regulates transcription of bacterial ribonucleotide reductase nrd genes and operons by binding to NrdR-boxes. This chain is Transcriptional repressor NrdR, found in Bacillus licheniformis (strain ATCC 14580 / DSM 13 / JCM 2505 / CCUG 7422 / NBRC 12200 / NCIMB 9375 / NCTC 10341 / NRRL NRS-1264 / Gibson 46).